Consider the following 220-residue polypeptide: UPF0319 protein YccT (220 aa).

Residues 1 to 20 (MKAGTLTLLIALCLPISVSA) form the signal peptide.

This sequence belongs to the UPF0319 family.

This Escherichia fergusonii (strain ATCC 35469 / DSM 13698 / CCUG 18766 / IAM 14443 / JCM 21226 / LMG 7866 / NBRC 102419 / NCTC 12128 / CDC 0568-73) protein is UPF0319 protein YccT.